Reading from the N-terminus, the 157-residue chain is Small ribosomal subunit protein uS7 (157 aa).

It belongs to the universal ribosomal protein uS7 family. Part of the 30S ribosomal subunit. Contacts proteins S9 and S11.

In terms of biological role, one of the primary rRNA binding proteins, it binds directly to 16S rRNA where it nucleates assembly of the head domain of the 30S subunit. Is located at the subunit interface close to the decoding center, probably blocks exit of the E-site tRNA. This is Small ribosomal subunit protein uS7 from Eikenella corrodens.